Reading from the N-terminus, the 311-residue chain is Energy-coupling factor transporter ATP-binding protein EcfA (311 aa).

Residues 2 to 237 (IELRDLSYSY…AELIRRASLR (236 aa)) enclose the ABC transporter domain. 35-42 (GPNGAGKS) is an ATP binding site.

The protein belongs to the ABC transporter superfamily. Energy-coupling factor EcfA family. In terms of assembly, forms a stable energy-coupling factor (ECF) transporter complex composed of 2 membrane-embedded substrate-binding proteins (S component), 2 ATP-binding proteins (A component) and 2 transmembrane proteins (T component).

The protein localises to the cell membrane. Its function is as follows. ATP-binding (A) component of a common energy-coupling factor (ECF) ABC-transporter complex. Unlike classic ABC transporters this ECF transporter provides the energy necessary to transport a number of different substrates. In Methanothermobacter thermautotrophicus (strain ATCC 29096 / DSM 1053 / JCM 10044 / NBRC 100330 / Delta H) (Methanobacterium thermoautotrophicum), this protein is Energy-coupling factor transporter ATP-binding protein EcfA.